Here is a 257-residue protein sequence, read N- to C-terminus: Ribonuclease HII (257 aa).

Residues 70–257 (EFIAGIDEVG…PIKSMVAGGN (188 aa)) enclose the RNase H type-2 domain. A divalent metal cation-binding residues include D76, E77, and D168.

Belongs to the RNase HII family. Mn(2+) is required as a cofactor. It depends on Mg(2+) as a cofactor.

The protein resides in the cytoplasm. The catalysed reaction is Endonucleolytic cleavage to 5'-phosphomonoester.. In terms of biological role, endonuclease that specifically degrades the RNA of RNA-DNA hybrids. The protein is Ribonuclease HII of Streptococcus suis (strain 98HAH33).